A 121-amino-acid polypeptide reads, in one-letter code: Large ribosomal subunit protein uL14 (121 aa).

Belongs to the universal ribosomal protein uL14 family. Part of the 50S ribosomal subunit. Forms a cluster with proteins L3 and L19. In the 70S ribosome, L14 and L19 interact and together make contacts with the 16S rRNA in bridges B5 and B8.

In terms of biological role, binds to 23S rRNA. Forms part of two intersubunit bridges in the 70S ribosome. The protein is Large ribosomal subunit protein uL14 of Mycoplasmopsis synoviae (strain 53) (Mycoplasma synoviae).